A 250-amino-acid chain; its full sequence is 5-oxoprolinase subunit A 2 (250 aa).

The protein belongs to the LamB/PxpA family. In terms of assembly, forms a complex composed of PxpA, PxpB and PxpC.

The catalysed reaction is 5-oxo-L-proline + ATP + 2 H2O = L-glutamate + ADP + phosphate + H(+). Functionally, catalyzes the cleavage of 5-oxoproline to form L-glutamate coupled to the hydrolysis of ATP to ADP and inorganic phosphate. This is 5-oxoprolinase subunit A 2 from Bordetella bronchiseptica (strain ATCC BAA-588 / NCTC 13252 / RB50) (Alcaligenes bronchisepticus).